The primary structure comprises 735 residues: DNA replication licensing factor mcm5-B (735 aa).

Positions Ile332–Met538 constitute an MCM domain. Residue Arg372 participates in ADP binding. The Arginine finger motif lies at Ser513 to Asp516.

It belongs to the MCM family. Component of the mcm2-7 complex (RLF-M). The complex forms a toroidal hexameric ring with the proposed subunit order mcm2-mcm6-mcm4-mcm7-mcm3-mcm5. The heterodimer of mmcm3/mcm5 interacts with mcm4, mmcm6, mcm7 and weakly with mcm2. Component of the CMG helicase complex, composed of the mcm2-7 complex, the GINS complex and cdc45.

The protein localises to the nucleus. It is found in the chromosome. It carries out the reaction ATP + H2O = ADP + phosphate + H(+). Acts as a component of the MCM2-7 complex (MCM complex) which is the replicative helicase essential for 'once per cell cycle' DNA replication initiation and elongation in eukaryotic cells. Core component of CDC45-MCM-GINS (CMG) helicase, the molecular machine that unwinds template DNA during replication, and around which the replisome is built. The active ATPase sites in the MCM2-7 ring are formed through the interaction surfaces of two neighboring subunits such that a critical structure of a conserved arginine finger motif is provided in trans relative to the ATP-binding site of the Walker A box of the adjacent subunit. The six ATPase active sites, however, are likely to contribute differentially to the complex helicase activity. The sequence is that of DNA replication licensing factor mcm5-B (mcm5-b) from Xenopus laevis (African clawed frog).